Here is a 71-residue protein sequence, read N- to C-terminus: Putative membrane protein insertion efficiency factor (71 aa).

The protein belongs to the UPF0161 family.

Its subcellular location is the cell membrane. Its function is as follows. Could be involved in insertion of integral membrane proteins into the membrane. The protein is Putative membrane protein insertion efficiency factor of Acetivibrio thermocellus (strain ATCC 27405 / DSM 1237 / JCM 9322 / NBRC 103400 / NCIMB 10682 / NRRL B-4536 / VPI 7372) (Clostridium thermocellum).